We begin with the raw amino-acid sequence, 283 residues long: Pantothenate synthetase (283 aa).

26-33 (MGNLHEGH) provides a ligand contact to ATP. The Proton donor role is filled by histidine 33. Glutamine 57 provides a ligand contact to (R)-pantoate. Glutamine 57 is a beta-alanine binding site. Residue 148-151 (GKKD) participates in ATP binding. Glutamine 154 is a (R)-pantoate binding site. 185–188 (LSSR) contributes to the ATP binding site.

The protein belongs to the pantothenate synthetase family. As to quaternary structure, homodimer.

Its subcellular location is the cytoplasm. The enzyme catalyses (R)-pantoate + beta-alanine + ATP = (R)-pantothenate + AMP + diphosphate + H(+). It participates in cofactor biosynthesis; (R)-pantothenate biosynthesis; (R)-pantothenate from (R)-pantoate and beta-alanine: step 1/1. In terms of biological role, catalyzes the condensation of pantoate with beta-alanine in an ATP-dependent reaction via a pantoyl-adenylate intermediate. The chain is Pantothenate synthetase from Polaromonas naphthalenivorans (strain CJ2).